The sequence spans 343 residues: Dihydroorotase (343 aa).

Residues histidine 14 and histidine 16 each coordinate Zn(2+). Substrate contacts are provided by residues 16 to 18 (HLR) and asparagine 42. Positions 100, 137, and 175 each coordinate Zn(2+). Lysine 100 is subject to N6-carboxylysine. Histidine 137 is a substrate binding site. Substrate is bound at residue leucine 220. Residue aspartate 248 coordinates Zn(2+). Aspartate 248 is an active-site residue. 2 residues coordinate substrate: histidine 252 and alanine 264.

Belongs to the metallo-dependent hydrolases superfamily. DHOase family. Class II DHOase subfamily. In terms of assembly, homodimer. Requires Zn(2+) as cofactor.

It catalyses the reaction (S)-dihydroorotate + H2O = N-carbamoyl-L-aspartate + H(+). The protein operates within pyrimidine metabolism; UMP biosynthesis via de novo pathway; (S)-dihydroorotate from bicarbonate: step 3/3. In terms of biological role, catalyzes the reversible cyclization of carbamoyl aspartate to dihydroorotate. The protein is Dihydroorotase of Synechococcus sp. (strain CC9902).